The sequence spans 706 residues: Polyribonucleotide nucleotidyltransferase (706 aa).

2 residues coordinate Mg(2+): aspartate 485 and aspartate 491. Positions 552-611 constitute a KH domain; sequence PRMLKMKIHPDKIREVIGSGGKTINKIIEDTGVKIDIENDGTIFIAAQTQEAGELALSII. The region spanning 621–689 is the S1 motif domain; sequence GDIFKGKVIK…QQGKVSLSRK (69 aa).

The protein belongs to the polyribonucleotide nucleotidyltransferase family. Mg(2+) serves as cofactor.

Its subcellular location is the cytoplasm. The enzyme catalyses RNA(n+1) + phosphate = RNA(n) + a ribonucleoside 5'-diphosphate. Its function is as follows. Involved in mRNA degradation. Catalyzes the phosphorolysis of single-stranded polyribonucleotides processively in the 3'- to 5'-direction. The polypeptide is Polyribonucleotide nucleotidyltransferase (Alkaliphilus oremlandii (strain OhILAs) (Clostridium oremlandii (strain OhILAs))).